The primary structure comprises 236 residues: Phosphoribosylaminoimidazole-succinocarboxamide synthase (236 aa).

This sequence belongs to the SAICAR synthetase family.

It carries out the reaction 5-amino-1-(5-phospho-D-ribosyl)imidazole-4-carboxylate + L-aspartate + ATP = (2S)-2-[5-amino-1-(5-phospho-beta-D-ribosyl)imidazole-4-carboxamido]succinate + ADP + phosphate + 2 H(+). It participates in purine metabolism; IMP biosynthesis via de novo pathway; 5-amino-1-(5-phospho-D-ribosyl)imidazole-4-carboxamide from 5-amino-1-(5-phospho-D-ribosyl)imidazole-4-carboxylate: step 1/2. The sequence is that of Phosphoribosylaminoimidazole-succinocarboxamide synthase from Akkermansia muciniphila (strain ATCC BAA-835 / DSM 22959 / JCM 33894 / BCRC 81048 / CCUG 64013 / CIP 107961 / Muc).